A 749-amino-acid chain; its full sequence is NAD(P)H-quinone oxidoreductase subunit 5, chloroplastic (749 aa).

Helical transmembrane passes span 9-29 (WIIP…LLLV), 40-60 (WAFF…DLSI), 89-109 (IDPL…MVLI), 147-167 (IYIF…FWFT), 185-205 (GDFG…SFEF), 219-239 (NGVN…GAVA), 258-278 (TPIS…FLVA), 280-300 (LLPL…IGVI), 327-347 (LGYI…FHLI), 354-374 (ALLF…VGYS), 396-416 (ITFL…CFWS), 425-445 (WLYS…TAFY), 544-564 (TMLL…FIGV), 605-625 (IFSV…YGSV), 694-714 (GITN…KYVG), and 722-742 (LFLY…CFGI).

The protein belongs to the complex I subunit 5 family. As to quaternary structure, NDH is composed of at least 16 different subunits, 5 of which are encoded in the nucleus.

It localises to the plastid. The protein localises to the chloroplast thylakoid membrane. It catalyses the reaction a plastoquinone + NADH + (n+1) H(+)(in) = a plastoquinol + NAD(+) + n H(+)(out). It carries out the reaction a plastoquinone + NADPH + (n+1) H(+)(in) = a plastoquinol + NADP(+) + n H(+)(out). Its function is as follows. NDH shuttles electrons from NAD(P)H:plastoquinone, via FMN and iron-sulfur (Fe-S) centers, to quinones in the photosynthetic chain and possibly in a chloroplast respiratory chain. The immediate electron acceptor for the enzyme in this species is believed to be plastoquinone. Couples the redox reaction to proton translocation, and thus conserves the redox energy in a proton gradient. This chain is NAD(P)H-quinone oxidoreductase subunit 5, chloroplastic (ndhF), found in Illicium oligandrum (Star anise).